The primary structure comprises 327 residues: Probable protein phosphatase 2C 59 (327 aa).

The N-terminal stretch at 1-24 (MREVLLLGSLVVLALLSLFPCCSC) is a signal peptide. One can recognise a PPM-type phosphatase domain in the interval 64–310 (SYGYASSPGK…DNITCLVVRF (247 aa)). Positions 100, 101, 262, and 301 each coordinate Mn(2+).

Belongs to the PP2C family. It depends on Mg(2+) as a cofactor. The cofactor is Mn(2+).

The enzyme catalyses O-phospho-L-seryl-[protein] + H2O = L-seryl-[protein] + phosphate. The catalysed reaction is O-phospho-L-threonyl-[protein] + H2O = L-threonyl-[protein] + phosphate. This is Probable protein phosphatase 2C 59 from Oryza sativa subsp. japonica (Rice).